A 158-amino-acid chain; its full sequence is NAD(P)H-quinone oxidoreductase subunit O, chloroplastic (158 aa).

The N-terminal 38 residues, 1 to 38, are a transit peptide targeting the chloroplast; it reads MAFSATVSQLSSLSTISSSLPISSRRLPHRSLPQFTVK. The disordered stretch occupies residues 33 to 70; sequence PQFTVKAEAEKEKQSTQGKSDGEASPAATKTPKTLPKK. Positions 56 to 70 are enriched in low complexity; the sequence is ASPAATKTPKTLPKK.

The protein belongs to the NDH complex subunit O family. As to quaternary structure, part of the chloroplast NDH complex, composed of a mixture of chloroplast and nucleus encoded subunits. Component of the NDH subcomplex A, at least composed of ndhH, ndhI, ndhJ, ndhK, ndhL, ndhM, ndhN and ndhO.

It is found in the plastid. Its subcellular location is the chloroplast thylakoid membrane. The enzyme catalyses a plastoquinone + NADH + (n+1) H(+)(in) = a plastoquinol + NAD(+) + n H(+)(out). The catalysed reaction is a plastoquinone + NADPH + (n+1) H(+)(in) = a plastoquinol + NADP(+) + n H(+)(out). Functionally, NDH shuttles electrons from NAD(P)H:plastoquinone, via FMN and iron-sulfur (Fe-S) centers, to quinones in the photosynthetic chain and possibly in a chloroplast respiratory chain. The immediate electron acceptor for the enzyme in this species is believed to be plastoquinone. Couples the redox reaction to proton translocation, and thus conserves the redox energy in a proton gradient. The polypeptide is NAD(P)H-quinone oxidoreductase subunit O, chloroplastic (Arabidopsis thaliana (Mouse-ear cress)).